We begin with the raw amino-acid sequence, 322 residues long: Ferrochelatase (322 aa).

Residues H193 and E274 each coordinate Fe cation.

This sequence belongs to the ferrochelatase family.

It localises to the cytoplasm. The enzyme catalyses heme b + 2 H(+) = protoporphyrin IX + Fe(2+). The protein operates within porphyrin-containing compound metabolism; protoheme biosynthesis; protoheme from protoporphyrin-IX: step 1/1. Its function is as follows. Catalyzes the ferrous insertion into protoporphyrin IX. The sequence is that of Ferrochelatase from Aliivibrio fischeri (strain MJ11) (Vibrio fischeri).